The sequence spans 405 residues: MDTQAFKRSLHHSDRYNRRGFESPAKRAQALEKAYQSNLIASIRDNGYLLEHGRLRVKLAEAFGFCWGVERAVAMAYETRRHYPTESIWITNEIIHNPSVNDHLRNMNVRFISAEKGIKDFSSVEEGDVVILPAFGATVHEMKLLHERGCHIIDTTCPWVSKVWHTVEKHKKHEFSSIIHGKVKHEETLATSSFAGTYLVVLDLKEAQYVSDYILGKGNRDDFLRRFSRASSQGFDPDRDLKRLGVANQTTMLKSETEEIGRLFEKTMLRKYGPAELNEHFLAFNTICDATEERQDAMFSLVDEPLDLLVVIGGFNSSNTTHLQEIALAKGIRSFHIDTPERIGEIENTITHKPLGDDLRVESNFLPEGKINVGITSGASTPDRIVEHVIQKLINLSERKLMTEN.

Position 66 (cysteine 66) interacts with [4Fe-4S] cluster. Histidine 96 lines the (2E)-4-hydroxy-3-methylbut-2-enyl diphosphate pocket. Histidine 96 serves as a coordination point for dimethylallyl diphosphate. Isopentenyl diphosphate is bound at residue histidine 96. Cysteine 157 is a [4Fe-4S] cluster binding site. Histidine 185 is a (2E)-4-hydroxy-3-methylbut-2-enyl diphosphate binding site. Residue histidine 185 coordinates dimethylallyl diphosphate. Histidine 185 contributes to the isopentenyl diphosphate binding site. The Proton donor role is filled by glutamate 187. Threonine 250 serves as a coordination point for (2E)-4-hydroxy-3-methylbut-2-enyl diphosphate. Cysteine 288 contributes to the [4Fe-4S] cluster binding site. (2E)-4-hydroxy-3-methylbut-2-enyl diphosphate is bound by residues serine 317, serine 318, asparagine 319, and serine 380. Dimethylallyl diphosphate-binding residues include serine 317, serine 318, asparagine 319, and serine 380. Positions 317, 318, 319, and 380 each coordinate isopentenyl diphosphate.

This sequence belongs to the IspH family. It depends on [4Fe-4S] cluster as a cofactor.

It carries out the reaction isopentenyl diphosphate + 2 oxidized [2Fe-2S]-[ferredoxin] + H2O = (2E)-4-hydroxy-3-methylbut-2-enyl diphosphate + 2 reduced [2Fe-2S]-[ferredoxin] + 2 H(+). It catalyses the reaction dimethylallyl diphosphate + 2 oxidized [2Fe-2S]-[ferredoxin] + H2O = (2E)-4-hydroxy-3-methylbut-2-enyl diphosphate + 2 reduced [2Fe-2S]-[ferredoxin] + 2 H(+). It participates in isoprenoid biosynthesis; dimethylallyl diphosphate biosynthesis; dimethylallyl diphosphate from (2E)-4-hydroxy-3-methylbutenyl diphosphate: step 1/1. The protein operates within isoprenoid biosynthesis; isopentenyl diphosphate biosynthesis via DXP pathway; isopentenyl diphosphate from 1-deoxy-D-xylulose 5-phosphate: step 6/6. In terms of biological role, catalyzes the conversion of 1-hydroxy-2-methyl-2-(E)-butenyl 4-diphosphate (HMBPP) into a mixture of isopentenyl diphosphate (IPP) and dimethylallyl diphosphate (DMAPP). Acts in the terminal step of the DOXP/MEP pathway for isoprenoid precursor biosynthesis. In Prochlorococcus marinus (strain SARG / CCMP1375 / SS120), this protein is 4-hydroxy-3-methylbut-2-enyl diphosphate reductase.